A 484-amino-acid chain; its full sequence is 1,3-beta-glucanosyltransferase GAS5 (484 aa).

The N-terminal stretch at 1–19 (MLLRSLTSAFVLSAGLAQA) is a signal peptide. N-linked (GlcNAc...) asparagine glycosylation is found at Asn24 and Asn60. A disulfide bridge links Cys71 with Cys100. Tyr89, Asn159, and Glu160 together coordinate (1,3-beta-D-glucosyl)n. The active-site Proton donor is the Glu160. N-linked (GlcNAc...) asparagine glycosylation occurs at Asn166. (1,3-beta-D-glucosyl)n is bound by residues Asp201 and Arg206. 2 disulfides stabilise this stretch: Cys215–Cys348 and Cys234–Cys265. Glu262 (nucleophile) is an active-site residue. Residue Tyr295 participates in (1,3-beta-D-glucosyl)n binding. N-linked (GlcNAc...) asparagine glycosylation is found at Asn299, Asn344, and Asn359. Residues 383–462 (TGIATQQSCD…SSQSSSKSKG (80 aa)) are disordered. Over residues 394–404 (KDDDDEEDDDT) the composition is skewed to acidic residues. A compositionally biased stretch (low complexity) spans 405–462 (SSSSSSSSSSSSSASSSSESSSSTSKASSSSPSASETSLLKSAASATSSSQSSSKSKG). Gly462 carries the GPI-anchor amidated glycine lipid modification. A propeptide spans 463–484 (AAGIIEIPLIFRALAELYNLVL) (removed in mature form).

Belongs to the glycosyl hydrolase 72 family. In terms of processing, the GPI-anchor is attached to the protein in the endoplasmic reticulum and serves to target the protein to the cell surface. There, the glucosamine-inositol phospholipid moiety is cleaved off and the GPI-modified mannoprotein is covalently attached via its lipidless GPI glycan remnant to the 1,6-beta-glucan of the outer cell wall layer.

It localises to the secreted. The protein resides in the cell wall. The protein localises to the membrane. Functionally, splits internally a 1,3-beta-glucan molecule and transfers the newly generated reducing end (the donor) to the non-reducing end of another 1,3-beta-glucan molecule (the acceptor) forming a 1,3-beta linkage, resulting in the elongation of 1,3-beta-glucan chains in the cell wall. Involved in cell wall biosynthesis and morphogenesis. The sequence is that of 1,3-beta-glucanosyltransferase GAS5 (GAS5) from Saccharomyces cerevisiae (strain ATCC 204508 / S288c) (Baker's yeast).